Here is a 925-residue protein sequence, read N- to C-terminus: GPI ethanolamine phosphate transferase 1 (925 aa).

The Cytoplasmic portion of the chain corresponds to 1-6 (MWNKHR). A helical membrane pass occupies residues 7–27 (LAFILVGLLFHLFYLRSIFDI). The Lumenal segment spans residues 28 to 457 (YFVSPLVHGM…TTYNWRFIRS (430 aa)). Asn90, Asn138, Asn198, Asn286, Asn312, and Asn358 each carry an N-linked (GlcNAc...) asparagine glycan. The chain crosses the membrane as a helical span at residues 458–478 (IVTLGFIGWITYSFTIFLRLF). Topologically, residues 479-492 (ILEKQYAMKTSPQN) are cytoplasmic. The chain crosses the membrane as a helical span at residues 493–510 (LASFGALTAALNYVLYYQ). Topologically, residues 511–516 (RSPFNY) are lumenal. The helical transmembrane segment at 517–537 (YMYLLFPLFFWSQILTNSTIL) threads the bilayer. Residues 538-547 (HDGIREMFKG) are Cytoplasmic-facing. Residues 548-568 (VSMLQRIGICALIVSIYEGIV) form a helical membrane-spanning segment. Residues 569–574 (YGYFDR) lie on the Lumenal side of the membrane. A helical transmembrane segment spans residues 575-595 (WIFTIIFNLLALYPFFCGIKD). At 596-599 (AKTN) the chain is on the cytoplasmic side. A helical membrane pass occupies residues 600-620 (MFWGANSMALSIFTLFDAVKI). Residue Glu621 is a topological domain, lumenal. The helical transmembrane segment at 622–642 (SLTQINVSGLLLVASGLYALW) threads the bilayer. Topologically, residues 643–653 (RVSKKINSHTK) are cytoplasmic. A helical membrane pass occupies residues 654 to 674 (IVILLQILLLAMMLAVTNKSV). The Lumenal portion of the chain corresponds to 675–687 (TSLQQRAGLPTDA). A helical transmembrane segment spans residues 688–708 (KIAGWVILTLSLSLMPLLHYL). Topologically, residues 709 to 719 (KPSNDYQVRVL) are cytoplasmic. The helical transmembrane segment at 720–740 (VIYLTFAPTFLILTISFESFF) threads the bilayer. The Lumenal segment spans residues 741–775 (YLLFTNYLMLWIEIESKIKAQNIAKNSQNWLQLLR). Residues 776–796 (ISIIGFFLLQFAFFGTGNVAS) form a helical membrane-spanning segment. The Cytoplasmic segment spans residues 797–818 (ISSFSLDSVYRLMPVFDPFPMG). Residues 819–839 (ALLILKIMIPYILLSTALGIM) form a helical membrane-spanning segment. The Lumenal segment spans residues 840 to 848 (NLKLNIKDY). A helical membrane pass occupies residues 849 to 869 (TVSSLILSTSDVLSLNFFYLL). Residues 870-885 (RTEGSWLDIGVTISNY) are Cytoplasmic-facing. Residues 886-906 (CLAILSSLFMIVLELFSHFLL) form a helical membrane-spanning segment. Residues 907–925 (KNVRDNGMDIAASKQQKRH) lie on the Lumenal side of the membrane.

This sequence belongs to the PIGG/PIGN/PIGO family. PIGN subfamily.

The protein localises to the endoplasmic reticulum membrane. Its pathway is glycolipid biosynthesis; glycosylphosphatidylinositol-anchor biosynthesis. Its function is as follows. Ethanolamine phosphate transferase involved in glycosylphosphatidylinositol-anchor biosynthesis. Transfers ethanolamine phosphate to the first alpha-1,4-linked mannose of the glycosylphosphatidylinositol precursor of GPI-anchor. The sequence is that of GPI ethanolamine phosphate transferase 1 (MCD4) from Eremothecium gossypii (strain ATCC 10895 / CBS 109.51 / FGSC 9923 / NRRL Y-1056) (Yeast).